The following is a 364-amino-acid chain: 3-dehydroquinate synthase (364 aa).

NAD(+) contacts are provided by residues 73–78 (DGEQNK), 107–111 (GVIGD), 131–132 (TT), Lys-144, Lys-153, and 171–174 (CLCT). 3 residues coordinate Zn(2+): Glu-186, His-249, and His-266.

Belongs to the sugar phosphate cyclases superfamily. Dehydroquinate synthase family. Requires NAD(+) as cofactor. It depends on Co(2+) as a cofactor. The cofactor is Zn(2+).

The protein localises to the cytoplasm. The enzyme catalyses 7-phospho-2-dehydro-3-deoxy-D-arabino-heptonate = 3-dehydroquinate + phosphate. Its pathway is metabolic intermediate biosynthesis; chorismate biosynthesis; chorismate from D-erythrose 4-phosphate and phosphoenolpyruvate: step 2/7. Catalyzes the conversion of 3-deoxy-D-arabino-heptulosonate 7-phosphate (DAHP) to dehydroquinate (DHQ). The sequence is that of 3-dehydroquinate synthase from Blochmanniella floridana.